The following is a 125-amino-acid chain: Small ribosomal subunit protein bS6 (125 aa).

Positions Val96 to Thr125 are disordered. The span at Glu116 to Thr125 shows a compositional bias: basic and acidic residues.

It belongs to the bacterial ribosomal protein bS6 family.

Binds together with bS18 to 16S ribosomal RNA. In Nitrosospira multiformis (strain ATCC 25196 / NCIMB 11849 / C 71), this protein is Small ribosomal subunit protein bS6.